Here is a 95-residue protein sequence, read N- to C-terminus: DASH complex subunit DAD3 (95 aa).

It belongs to the DASH complex DAD3 family. As to quaternary structure, component of the DASH complex consisting of ASK1, DAD1, DAD2, DAD3, DAD4, DAM1, DUO1, HSK3, SPC19 and SPC34, with a stoichiometry of one copy of each subunit per complex. Multiple DASH complexes oligomerize to form a ring that encircles spindle microtubules and organizes the rod-like NDC80 complexes of the outer kinetochore. DASH complex oligomerization strengthens microtubule attachments. On cytoplasmic microtubules, DASH complexes appear to form patches instead of rings.

It localises to the chromosome. The protein resides in the centromere. The protein localises to the kinetochore. It is found in the cytoplasm. Its subcellular location is the cytoskeleton. It localises to the spindle. The protein resides in the nucleus. In terms of biological role, component of the DASH complex that connects microtubules with kinetochores and couples microtubule depolymerisation to chromosome movement; it is involved in retrieving kinetochores to the spindle poles before their re-orientation on the spindle in early mitosis and allows microtubule depolymerization to pull chromosomes apart and resist detachment during anaphase. Kinetochores, consisting of a centromere-associated inner segment and a microtubule-contacting outer segment, play a crucial role in chromosome segregation by mediating the physical connection between centromeric DNA and microtubules. Kinetochores also serve as an input point for the spindle assembly checkpoint, which delays anaphase until all chromosomes have bioriented on the mitotic spindle. This is DASH complex subunit DAD3 from Chaetomium thermophilum (strain DSM 1495 / CBS 144.50 / IMI 039719) (Thermochaetoides thermophila).